We begin with the raw amino-acid sequence, 1143 residues long: MEAAAMAVTAATGALAPVLVKLAALLDDGECNLLEGSRSDAEFIRSELEAVHSLLTPNILGRMGDDDAACKDGLIAEVRELSYDLDDAVDDFLELNFEQRRSASPFGELKARVEERVSNRFSDWKLPAASLPPSSVHRRAGLPPPDAGLVGMHKRKEELIELLEQGSSDASRWRKRKPHVPLRIMGGEMQKIVFKIPMVDDKSRTKAMSLVASTVGVHSVAIAGDLRDQVVVVGDGIDSINLVSALRKKVGPAMFLEVSQVKEDVKEITAMLAPVKSICEFHEVKTICILGLPGGGKTTIARVLYHALGTQFQCRVFASISPSSSPSPNLTETLADIFAQAQLGVTDTLSTPYGGSGTGRALQQHLIDNISAFLLNKKYLIVIDDIWHWEEWEVIRKSIPKNDLGGRIIMTTRLNSIAEKCHTDDNDVFVYEVGDLDNNDAWSLSWGIATKSGAGNRIGTGEDNSCYDIVNMCYGMPLALIWLSSALVGEIEELGGAEVKKCRDLRHIEDGILDIPSLQPLAESLCLGYNHLPLYLRTLLLYCSAYHWSNRIERGRLVRRWIAEGFVSEEKEAEGYFGELINRGWITQHGDNNSYNYYEIHPVMLAFLRCKSKEYNFLTCLGLGSDTSTSASSPRLIRRLSLQGGYPVDCLSSMSMDVSHTCSLVVLGDVARPKGIPFYMFKRLRVLDLEDNKDIQDSHLQGICEQLSLRVRYLGLKGTRIRKLPQEMRKLKHLEILYVGSTRISELPQEIGELKHLRILDVRNTDITELPLQIRELQHLHTLDVRNTPISELPPQVGKLQNLKIMCVRSTGVRELPKEIGELNHLQTLDVRNTRVRELPWQAGQISQSLRVLAGDSGDGVRLPEGVCEALINGIPGATRAKCREVLSIAIIDRFGPPLVGIFKVPGSHMRIPKMIKDHFRVLSCLDIRLCHKLEDDDQKFLAEMPNLQTLVLRFEALPRQPITINGTGFQMLESFRVDSRVPRIAFHEDAMPNLKLLEFKFYAGPASNDAIGITNLKSLQKVVFRCSPWYKSDAPGISATIDVVKKEAEEHPNRPITLLINAGYKEISTESHGSSENIAGSSGIDTEPAQAQHDNLPAVRDDYKGKGILLDGRCPTCGRATKIEEETQDRVADIEIQTETTS.

The segment at 1–190 (MEAAAMAVTA…PLRIMGGEMQ (190 aa)) is structured coiled coil (CC) domain. The 70-residue stretch at 189-258 (MQKIVFKIPM…KVGPAMFLEV (70 aa)) folds into the HMA domain. An HMA-like domain region spans residues 191-264 (KIVFKIPMVD…FLEVSQVKED (74 aa)). Residues 282–570 (HEVKTICILG…WIAEGFVSEE (289 aa)) enclose the NB-ARC domain. 10 LRR repeats span residues 681–706 (FKRL…ICEQ), 708–731 (SLRV…MRKL), 732–754 (KHLE…IGEL), 756–777 (HLRI…IREL), 778–800 (QHLH…VGKL), 802–823 (NLKI…IGEL), 824–848 (NHLQ…QISQ), 945–968 (MPNL…INGT), 979–1002 (DSRV…EFKF), and 1004–1027 (AGPA…VFRC).

It belongs to the disease resistance NB-LRR family. As to quaternary structure, interacts with AVR-Pik through its N-terminal part containing the HMA-like domain. Constitutively expressed.

Functionally, disease resistance (R) protein that specifically recognizes the AVR-Pik effector avirulence protein from M.oryzae. Resistance proteins guard the plant against pathogens that contain an appropriate avirulence protein via an indirect interaction with this avirulence protein. That triggers a defense system including the hypersensitive response, which restricts the pathogen growth. Contribution of Pikm-2 is required to recognize the effector avirulence protein AVR-Pik. The chain is Disease resistance protein Pikm1-TS from Oryza sativa subsp. japonica (Rice).